We begin with the raw amino-acid sequence, 465 residues long: Serine carboxypeptidase-like 19 (465 aa).

The signal sequence occupies residues 1-23 (MRNLSFIVLFLLTLFFIHHLVDA). 77–79 (TGG) is a substrate binding site. Intrachain disulfides connect Cys-82-Cys-353, Cys-246-Cys-260, and Cys-284-Cys-320. A glycan (N-linked (GlcNAc...) asparagine) is linked at Asn-103. 177–179 (DSY) serves as a coordination point for substrate. The active site involves Ser-178. Residues 292–317 (DTPNIRTDRRRVMKEFSVNDSSSLPP) constitute a propeptide, linker peptide. N-linked (GlcNAc...) asparagine glycosylation is found at Asn-310 and Asn-373. Asp-389 is a catalytic residue. N-linked (GlcNAc...) asparagine glycosylation occurs at Asn-405. 439 to 443 (KGGGH) contributes to the substrate binding site. Residue His-443 is part of the active site.

The protein belongs to the peptidase S10 family. In terms of assembly, heterodimer. Post-translationally, N-glycosylated. Expressed in roots and flowers, and at lower levels in young leaves and seedlings. Expressed in mature seeds and detected in expanding siliques.

The protein localises to the secreted. It carries out the reaction 1-O-(trans-sinapoyl)-beta-D-glucose + choline = O-sinapoylcholine + D-glucose. Slightly inhibited by phenylmethylsulfonyl fluoride (PMSF). Involved in plants secondary metabolism. Functions as acyltransferase to form the sinapate ester sinapoylcholine also known as sinapine. Able to convert in vitro benzoylglucose into benzoylcholine. The sequence is that of Serine carboxypeptidase-like 19 from Arabidopsis thaliana (Mouse-ear cress).